The primary structure comprises 321 residues: Putative membrane-bound redox modulator Alx (321 aa).

The Periplasmic portion of the chain corresponds to 1–6; sequence MNTVGT. The helical transmembrane segment at 7–27 threads the bilayer; it reads PLLWGGFAVVVAIMLAIDLLL. Topologically, residues 28-43 are cytoplasmic; that stretch reads QGRRGAHAMTMKQAAA. A helical membrane pass occupies residues 44 to 64; that stretch reads WSLVWVTLSLLFNAAFWWYLV. Topologically, residues 65 to 89 are periplasmic; sequence QTEGRAVADPQALAFLTGYLIEKSL. A helical transmembrane segment spans residues 90–110; the sequence is AVDNVFVWLMLFSYFSVPAAL. The Cytoplasmic segment spans residues 111–113; sequence QRR. Residues 114–134 form a helical membrane-spanning segment; it reads VLVYGVLGAIVLRTIMIFTGS. A topological domain (periplasmic) is located at residue tryptophan 135. The chain crosses the membrane as a helical span at residues 136–156; it reads LISQFDWILYIFGAFLLFTGV. At 157–198 the chain is on the cytoplasmic side; the sequence is KMALAHEDESGIGDKPLVRWLRGHLRMTDTIDNEHFFVRKNG. Residues 199–219 traverse the membrane as a helical segment; that stretch reads LLYATPLMLVLILVELSDVIF. Over 220-225 the chain is Periplasmic; the sequence is AVDSIP. The chain crosses the membrane as a helical span at residues 226-246; that stretch reads AIFAVTTDPFIVLTSNLFAIL. Residues 247 to 261 lie on the Cytoplasmic side of the membrane; that stretch reads GLRAMYFLLAGVAER. A helical membrane pass occupies residues 262–282; it reads FSMLKYGLAVILVFIGIKMLI. The Periplasmic segment spans residues 283-286; it reads VDFY. Residues 287 to 307 form a helical membrane-spanning segment; it reads HIPIAVSLGVVFGILVMTFII. The Cytoplasmic segment spans residues 308-321; it reads NAWVNYRHDKQRGG.

This sequence belongs to the TerC family.

It is found in the cell inner membrane. Its function is as follows. Has been proposed to be a redox modulator. The protein is Putative membrane-bound redox modulator Alx of Escherichia coli (strain K12).